The following is a 111-amino-acid chain: Probable 4-amino-4-deoxy-L-arabinose-phosphoundecaprenol flippase subunit ArnE (111 aa).

The Cytoplasmic segment spans residues 1–37 (MIWLTLVFASLLSVAGQLCQKQATCFVAINKRRKHIA). A helical membrane pass occupies residues 38 to 58 (LWLGLALACLGLAMVLWLLVL). Residues 40-109 (LGLALACLGL…IIGGIVILGS (70 aa)) enclose the EamA domain. Over 59–60 (QN) the chain is Periplasmic. A helical transmembrane segment spans residues 61-81 (VPVGIAYPMLSLNFVWVTLAA). The Cytoplasmic portion of the chain corresponds to 82-87 (VKLWHE). Residues 88-108 (PVSPRHWCGVAFIIGGIVILG) traverse the membrane as a helical segment. Over 109–111 (STV) the chain is Periplasmic.

It belongs to the ArnE family. In terms of assembly, heterodimer of ArnE and ArnF.

The protein resides in the cell inner membrane. Its pathway is bacterial outer membrane biogenesis; lipopolysaccharide biosynthesis. Translocates 4-amino-4-deoxy-L-arabinose-phosphoundecaprenol (alpha-L-Ara4N-phosphoundecaprenol) from the cytoplasmic to the periplasmic side of the inner membrane. The polypeptide is Probable 4-amino-4-deoxy-L-arabinose-phosphoundecaprenol flippase subunit ArnE (Escherichia coli (strain 55989 / EAEC)).